The sequence spans 1070 residues: DNA-directed RNA polymerase subunit beta (1070 aa).

This sequence belongs to the RNA polymerase beta chain family. In plastids the minimal PEP RNA polymerase catalytic core is composed of four subunits: alpha, beta, beta', and beta''. When a (nuclear-encoded) sigma factor is associated with the core the holoenzyme is formed, which can initiate transcription.

The protein resides in the plastid. It localises to the chloroplast. The catalysed reaction is RNA(n) + a ribonucleoside 5'-triphosphate = RNA(n+1) + diphosphate. Functionally, DNA-dependent RNA polymerase catalyzes the transcription of DNA into RNA using the four ribonucleoside triphosphates as substrates. The polypeptide is DNA-directed RNA polymerase subunit beta (Chaetosphaeridium globosum (Charophycean green alga)).